A 52-amino-acid chain; its full sequence is Large ribosomal subunit protein bL33 (52 aa).

This sequence belongs to the bacterial ribosomal protein bL33 family.

The polypeptide is Large ribosomal subunit protein bL33 (Helicobacter pylori (strain HPAG1)).